Consider the following 262-residue polypeptide: Indole-3-glycerol phosphate synthase (262 aa).

This sequence belongs to the TrpC family.

It carries out the reaction 1-(2-carboxyphenylamino)-1-deoxy-D-ribulose 5-phosphate + H(+) = (1S,2R)-1-C-(indol-3-yl)glycerol 3-phosphate + CO2 + H2O. The protein operates within amino-acid biosynthesis; L-tryptophan biosynthesis; L-tryptophan from chorismate: step 4/5. This chain is Indole-3-glycerol phosphate synthase, found in Staphylococcus epidermidis (strain ATCC 12228 / FDA PCI 1200).